A 631-amino-acid chain; its full sequence is Dolichyl-diphosphooligosaccharide--protein glycosyltransferase subunit 2 (631 aa).

An N-terminal signal peptide occupies residues 1–22 (MAPPGSSAVFLLALTITASTQA). The Lumenal segment spans residues 23 to 540 (LTPTHYLTKH…REPEKRPPTV (518 aa)). The N-linked (GlcNAc...) asparagine glycan is linked to Asn106. Residue Lys154 forms a Glycyl lysine isopeptide (Lys-Gly) (interchain with G-Cter in ubiquitin) linkage. Residues 541-561 (VSNTFTALILSPLLLLFALWI) form a helical membrane-spanning segment. Over 562–571 (RIGANVSNFT) the chain is Cytoplasmic. Residues 572 to 592 (FAPSTVIFHLGHAAMLGLMYV) form a helical membrane-spanning segment. The Lumenal portion of the chain corresponds to 593–596 (YWTQ). A helical transmembrane segment spans residues 597–617 (LNMFQTLKYLAVLGTVTFLAG). Residues 618 to 631 (NRMLAQQAVKRTAH) are Cytoplasmic-facing.

The protein belongs to the SWP1 family. As to quaternary structure, component of the oligosaccharyltransferase (OST) complex. OST exists in two different complex forms which contain common core subunits RPN1, RPN2, OST48, OST4, DAD1 and TMEM258, either STT3A or STT3B as catalytic subunits, and form-specific accessory subunits. STT3A complex assembly occurs through the formation of 3 subcomplexes. Subcomplex 1 contains RPN1 and TMEM258, subcomplex 2 contains the STT3A-specific subunits STT3A, DC2/OSTC, and KCP2 as well as the core subunit OST4, and subcomplex 3 contains RPN2, DAD1, and OST48. The STT3A complex can form stable complexes with the Sec61 complex or with both the Sec61 and TRAP complexes. Interacts with DDI2. Interacts with TMEM35A/NACHO.

It is found in the endoplasmic reticulum. It localises to the endoplasmic reticulum membrane. It participates in protein modification; protein glycosylation. Its function is as follows. Subunit of the oligosaccharyl transferase (OST) complex that catalyzes the initial transfer of a defined glycan (Glc(3)Man(9)GlcNAc(2) in eukaryotes) from the lipid carrier dolichol-pyrophosphate to an asparagine residue within an Asn-X-Ser/Thr consensus motif in nascent polypeptide chains, the first step in protein N-glycosylation. N-glycosylation occurs cotranslationally and the complex associates with the Sec61 complex at the channel-forming translocon complex that mediates protein translocation across the endoplasmic reticulum (ER). All subunits are required for a maximal enzyme activity. This chain is Dolichyl-diphosphooligosaccharide--protein glycosyltransferase subunit 2, found in Rattus norvegicus (Rat).